Consider the following 495-residue polypeptide: Transcription termination/antitermination protein NusA (495 aa).

The S1 motif domain maps to 135-200 (GKIVTGTVKK…KTAQLFVTRS (66 aa)). One can recognise a KH domain in the interval 302–374 (NHSMDIAVEA…LDEEFAQILV (73 aa)).

This sequence belongs to the NusA family. Monomer. Binds directly to the core enzyme of the DNA-dependent RNA polymerase and to nascent RNA.

It is found in the cytoplasm. Its function is as follows. Participates in both transcription termination and antitermination. This chain is Transcription termination/antitermination protein NusA, found in Haemophilus influenzae (strain ATCC 51907 / DSM 11121 / KW20 / Rd).